A 399-amino-acid chain; its full sequence is MTIEFNPSKRATLGVEWELQLVDRDSGHLRQDAQKLLEELPELSGAESNPPLRHELMQSTIEVVTGICETVDEVKEDLSATVARLTQAADGRGIELACAGTHPIDDWRDQEFAPSQRYSELIEQMQWLARRILTFGVHVHVGVTDRDKVIPIVNALSRYLPHFLALTASSPFWSGHDTGLASSRSIVFGALPTAGPPPRLAHWGAFEEYMDTLLRAGTITSIKEVWWDIRPHPEFGTVEIRMFDGIPTVREVGMAAALSQSLVQLFEQQLDRGYRLPSPSSWVVTDNKWRATRYGLDARIIIDERGSTVPLRDDLYELLHELRPIAERLGCAEDLDVVAEILHYGASYERQRAIIRQGGVLKDVVDALVKEFRAGAPAVGSSHGRTDPSRNGGPSHAGA.

Residues 377–399 (PAVGSSHGRTDPSRNGGPSHAGA) are disordered.

Belongs to the glutamate--cysteine ligase type 2 family. YbdK subfamily.

It catalyses the reaction L-cysteine + L-glutamate + ATP = gamma-L-glutamyl-L-cysteine + ADP + phosphate + H(+). In terms of biological role, ATP-dependent carboxylate-amine ligase which exhibits weak glutamate--cysteine ligase activity. The protein is Putative glutamate--cysteine ligase 2 of Thermobifida fusca (strain YX).